Here is a 607-residue protein sequence, read N- to C-terminus: Dopamine receptor 3 (607 aa).

At 1–23 the chain is on the extracellular side; it reads MLAGQHHVTDIESPLMVVLWRVA. A helical membrane pass occupies residues 24–44; sequence AGVFLPLVPTMAVFGNVLVIM. Topologically, residues 45-58 are cytoplasmic; sequence SVFRERSLQTVTNM. A helical membrane pass occupies residues 59-79; it reads LIVSLAVSDFMVAIGVMSFGV. The Extracellular portion of the chain corresponds to 80–96; that stretch reads YYEWNDFKWGLGSFFCH. A disulfide bridge links C95 with C173. Residues 97–117 traverse the membrane as a helical segment; it reads VYQALDVACSTASILNLLAIS. Over 118–141 the chain is Cytoplasmic; sequence LDRYIAIGHPISYAQYGARGGRAM. Residues 142 to 162 traverse the membrane as a helical segment; that stretch reads ISITIVWGVSVAVALPLLLGV. Residues 163–182 lie on the Extracellular side of the membrane; the sequence is NPMEENDLQECELANPYFNM. Residues 183-203 traverse the membrane as a helical segment; that stretch reads ISSIFSFFIPCIAMIILYTII. Topologically, residues 204–523 are cytoplasmic; it reads FRRLRQRERA…TKQMRREHKA (320 aa). Residues 402–435 form a disordered region; sequence VPSIQDEKKLSQKSNDLPFSHQNGTHKQKLLPNP. Positions 413 to 424 are enriched in polar residues; that stretch reads QKSNDLPFSHQN. Residues 524-544 form a helical membrane-spanning segment; it reads TVTLAVVLAVFLFCWLPFFVL. The Extracellular segment spans residues 545–558; it reads HLSNSICLIIDENS. A helical transmembrane segment spans residues 559–579; it reads ACVGFLPLYLATWLGYLNSSL. The Cytoplasmic portion of the chain corresponds to 580-607; it reads NPLIYTVFDQRFRNAFRNILSCGIFKKR.

Belongs to the G-protein coupled receptor 1 family. As to expression, expressed in the neurons of the head, ventral cord and tail with weak expression observed in body wall muscles and PVD neurons. In the ventral cord, expressed strongly in GABAergic neurons with weaker expression in cholinergic motor neurons. Expressed in cholinergic SIA neurons and octopaminergic RIC neurons. In males, expressed in the dorsal and ventral spicule protractor and retractor muscles, and the sensory post-cloacal sensilla B (PCB) neuron. Expressed in the head acetylcholine neurons. Expressed in the AVA, AVB, AVD and AVE command interneurons. Expressed in premotor interneurons.

It is found in the cell membrane. Its function is as follows. G-protein coupled receptor which binds to the neurotransmitter dopamine with high affinity leading to the activation of an associated G-protein and downstream signaling pathways. Couples to G-proteins to inhibit adenylate cyclase (AC) activity and cAMP production. Antagonizes the D1-like dopamine receptor dop-1 to negatively regulate the rate of locomotion. Negatively regulates locomotion through the activation of goa-1 subunit proteins which inactivates the unc-77/nca-1 and nca-2 ion-channels in the command interneurons. Inhibits early-stage swimming by modulating the unc-77/nca-1 and nca-2 ion channels of premotor interneurons. In GABAergic, RIC, and SIA neurons, antagonizes the function of dop-1 to play a role in behavioral plasticity and regulate the decision-making process when conflicting alternatives are present. Antagonizes octopamine signaling in response to food by promoting the dopamine-mediated suppression of crh-1/CREB1 transcription factor activation in cholinergic SIA neurons. This is most likely in association with the G(o)-alpha G-protein subunit goa-1. Promotes male mating behavior by antagonizing acetylcholine signaling to control the protrusion of copulatory spicules from the tail of males during hermaphrodite vulval location. Under mitochondria stress, plays a role in bacterial preference, resulting in learned avoidance behavior. In Caenorhabditis elegans, this protein is Dopamine receptor 3.